Reading from the N-terminus, the 140-residue chain is Vesicle transport protein GOT1 (140 aa).

The next 4 membrane-spanning stretches (helical) occupy residues 12–32 (IGLG…IFVF), 35–55 (GLIA…IGIN), 71–91 (ISFG…GLLL), and 96–116 (FLVL…RIPL).

The protein belongs to the GOT1 family. Homodimer. No interactions with STL1, STL2, CESA1, CESA3, CESA4, CESA6, CESA7 or CESA8.

Its subcellular location is the golgi apparatus membrane. May be involved in fusion of ER-derived transport vesicles with the Golgi complex. This chain is Vesicle transport protein GOT1, found in Arabidopsis thaliana (Mouse-ear cress).